The primary structure comprises 420 residues: Gamma-glutamyl phosphate reductase 2 (420 aa).

It belongs to the gamma-glutamyl phosphate reductase family.

The protein localises to the cytoplasm. The catalysed reaction is L-glutamate 5-semialdehyde + phosphate + NADP(+) = L-glutamyl 5-phosphate + NADPH + H(+). Its pathway is amino-acid biosynthesis; L-proline biosynthesis; L-glutamate 5-semialdehyde from L-glutamate: step 2/2. Functionally, catalyzes the NADPH-dependent reduction of L-glutamate 5-phosphate into L-glutamate 5-semialdehyde and phosphate. The product spontaneously undergoes cyclization to form 1-pyrroline-5-carboxylate. This is Gamma-glutamyl phosphate reductase 2 from Synechocystis sp. (strain ATCC 27184 / PCC 6803 / Kazusa).